Consider the following 202-residue polypeptide: Peptidyl-tRNA hydrolase (202 aa).

Tyr-19 contacts tRNA. Residue His-24 is the Proton acceptor of the active site. The tRNA site is built by Tyr-70, Asn-72, and Asn-118.

This sequence belongs to the PTH family. Monomer.

Its subcellular location is the cytoplasm. It catalyses the reaction an N-acyl-L-alpha-aminoacyl-tRNA + H2O = an N-acyl-L-amino acid + a tRNA + H(+). Hydrolyzes ribosome-free peptidyl-tRNAs (with 1 or more amino acids incorporated), which drop off the ribosome during protein synthesis, or as a result of ribosome stalling. Its function is as follows. Catalyzes the release of premature peptidyl moieties from peptidyl-tRNA molecules trapped in stalled 50S ribosomal subunits, and thus maintains levels of free tRNAs and 50S ribosomes. The chain is Peptidyl-tRNA hydrolase from Prochlorococcus marinus (strain NATL2A).